We begin with the raw amino-acid sequence, 406 residues long: Phosphatidylinositol 5-phosphate 4-kinase type-2 alpha (406 aa).

The residue at position 2 (Ala2) is an N-acetylalanine. Thr3 is subject to Phosphothreonine. Ser14 is modified (phosphoserine). Residues 33–405 (ASDPLLSVLM…RFLDFIGHIL (373 aa)) enclose the PIPK domain. The segment at 59 to 65 (VMLMPDD) is required for interaction with PIP5K1A. N6-acetyllysine is present on residues Lys89 and Lys145. A disordered region spans residues 288–329 (QEEVECEENDGEEEGESDGTHPVGTPPDSPGNTLNSSPPLAP). Residues 289–304 (EEVECEENDGEEEGES) are compositionally biased toward acidic residues.

In terms of assembly, homodimer. Interacts with PIP4K2B; the interaction may regulate localization to the nucleus. Probably interacts with PIP5K1A; the interaction inhibits PIP5K1A kinase activity. In terms of processing, phosphorylated in tyrosines. Phosphorylation is induced by light and increases kinase activity. In terms of tissue distribution, expressed ubiquitously, with high levels in the brain. Present in most tissues, except notably skeletal muscle and small intestine.

Its subcellular location is the cell membrane. It localises to the nucleus. The protein localises to the lysosome. The protein resides in the cytoplasm. It is found in the photoreceptor inner segment. Its subcellular location is the cell projection. It localises to the cilium. The protein localises to the photoreceptor outer segment. It carries out the reaction a 1,2-diacyl-sn-glycero-3-phospho-(1D-myo-inositol-5-phosphate) + ATP = a 1,2-diacyl-sn-glycero-3-phospho-(1D-myo-inositol-4,5-bisphosphate) + ADP + H(+). The enzyme catalyses 1,2-dihexadecanoyl-sn-glycero-3-phospho-(1D-myo-inositol-5-phosphate) + ATP = 1,2-dihexadecanoyl-sn-glycero-3-phospho-(1D-myo-inositol-4,5-bisphosphate) + ADP + H(+). It catalyses the reaction 1,2-dihexadecanoyl-sn-glycero-3-phospho-(1D-myo-inositol-5-phosphate) + GTP = 1,2-dihexadecanoyl-sn-glycero-3-phospho-(1D-myo-inositol-4,5-bisphosphate) + GDP + H(+). In rod outer segments, activated by light. Inhibited by I-OMe tyrphostin AG-538 (I-OMe-AG-538), acting as an ATP-competitive inhibitor. Functionally, catalyzes the phosphorylation of phosphatidylinositol 5-phosphate (PtdIns5P) on the fourth hydroxyl of the myo-inositol ring, to form phosphatidylinositol 4,5-bisphosphate (PtdIns(4,5)P2). Has both ATP- and GTP-dependent kinase activities. May exert its function by regulating the levels of PtdIns5P, which functions in the cytosol by increasing AKT activity and in the nucleus signals through ING2. May regulate the pool of cytosolic PtdIns5P in response to the activation of tyrosine phosphorylation. Required for lysosome-peroxisome membrane contacts and intracellular cholesterol transport through modulating peroxisomal PtdIns(4,5)P2 level. In collaboration with PIP4K2B, has a role in mediating autophagy in times of nutrient stress. Required for autophagosome-lysosome fusion and the regulation of cellular lipid metabolism. May be involved in thrombopoiesis, and the terminal maturation of megakaryocytes and regulation of their size. Negatively regulates insulin signaling through a catalytic-independent mechanism. PIP4Ks interact with PIP5Ks and suppress PIP5K-mediated PtdIns(4,5)P2 synthesis and insulin-dependent conversion to PtdIns(3,4,5)P3. This Homo sapiens (Human) protein is Phosphatidylinositol 5-phosphate 4-kinase type-2 alpha.